A 295-amino-acid polypeptide reads, in one-letter code: Lectin 11 (295 aa).

The Cytoplasmic portion of the chain corresponds to 1 to 22; that stretch reads MHYSHFYFIINNTNMTINAIPK. The helical transmembrane segment at 23 to 45 threads the bilayer; sequence LFATKNSISLSIVIFMYLLILVA. At 46–295 the chain is on the extracellular side; that stretch reads NVKSDSSFNF…ILSWSFTSNM (250 aa). Residue N152 is glycosylated (N-linked (GlcNAc...) asparagine).

This sequence belongs to the leguminous lectin family.

It localises to the membrane. May be involved in arbuscular mycorrhizal (AM) symbiosis with AM fungi. This Medicago truncatula (Barrel medic) protein is Lectin 11.